A 237-amino-acid polypeptide reads, in one-letter code: UPF0280 protein Mbur_0309 (237 aa).

The protein belongs to the UPF0280 family.

The protein is UPF0280 protein Mbur_0309 of Methanococcoides burtonii (strain DSM 6242 / NBRC 107633 / OCM 468 / ACE-M).